A 96-amino-acid chain; its full sequence is MQNTTHDNVILELTVRNHPGVMTHVCGLFARRAFNVEGILCLPIQDSDKSHIWLLVNDDQRLEQMISQIDKLEDVVKVQRNQSDPTMFNKIAVFFQ.

Positions 10–83 (ILELTVRNHP…DVVKVQRNQS (74 aa)) constitute an ACT domain.

It belongs to the acetolactate synthase small subunit family. As to quaternary structure, dimer of large and small chains.

The enzyme catalyses 2 pyruvate + H(+) = (2S)-2-acetolactate + CO2. The protein operates within amino-acid biosynthesis; L-isoleucine biosynthesis; L-isoleucine from 2-oxobutanoate: step 1/4. It participates in amino-acid biosynthesis; L-valine biosynthesis; L-valine from pyruvate: step 1/4. The protein is Acetolactate synthase isozyme 1 small subunit (ilvN) of Escherichia coli O157:H7.